Consider the following 258-residue polypeptide: MILDKIVAATKVRVEKAKLQKSFKTAKREALLNKKKNFVSFKKALSKAGINFICEVKKASPSKGLISTDFKYKEIALEYEKTGAAAISVLTEPNFFLGSIRYLQEIKSIVKIPVLRKDFIIDSYQIYESRVIGADAVLLICAVLSYDVLKEFLETAQGLGMSCLVEAHNEEEIETALKAGAEIIGVNNRNLRTFEVDFGNSMKLRRLVPVDKIFVSESGIKTKKHIDILKANDVNAVLIGEELMKSGNIAERLRELKD.

This sequence belongs to the TrpC family.

The catalysed reaction is 1-(2-carboxyphenylamino)-1-deoxy-D-ribulose 5-phosphate + H(+) = (1S,2R)-1-C-(indol-3-yl)glycerol 3-phosphate + CO2 + H2O. It participates in amino-acid biosynthesis; L-tryptophan biosynthesis; L-tryptophan from chorismate: step 4/5. The protein is Indole-3-glycerol phosphate synthase of Endomicrobium trichonymphae.